A 757-amino-acid chain; its full sequence is 5-methyltetrahydropteroyltriglutamate--homocysteine methyltransferase (757 aa).

5-methyltetrahydropteroyltri-L-glutamate is bound by residues 16–19 and Lys-112; that span reads RELK. L-homocysteine contacts are provided by residues 433–435 and Glu-486; that span reads IGS. Residues 433–435 and Glu-486 each bind L-methionine; that span reads IGS. 5-methyltetrahydropteroyltri-L-glutamate is bound by residues 517-518 and Trp-563; that span reads RC. Asp-601 provides a ligand contact to L-homocysteine. Position 601 (Asp-601) interacts with L-methionine. A 5-methyltetrahydropteroyltri-L-glutamate-binding site is contributed by Glu-607. Zn(2+) is bound by residues His-643, Cys-645, and Glu-667. His-696 functions as the Proton donor in the catalytic mechanism. Cys-728 is a binding site for Zn(2+).

Belongs to the vitamin-B12 independent methionine synthase family. Requires Zn(2+) as cofactor.

It carries out the reaction 5-methyltetrahydropteroyltri-L-glutamate + L-homocysteine = tetrahydropteroyltri-L-glutamate + L-methionine. The protein operates within amino-acid biosynthesis; L-methionine biosynthesis via de novo pathway; L-methionine from L-homocysteine (MetE route): step 1/1. Its function is as follows. Catalyzes the transfer of a methyl group from 5-methyltetrahydrofolate to homocysteine resulting in methionine formation. The polypeptide is 5-methyltetrahydropteroyltriglutamate--homocysteine methyltransferase (Histophilus somni (strain 2336) (Haemophilus somnus)).